A 250-amino-acid chain; its full sequence is UPF0259 membrane protein Spro_2675 (250 aa).

6 consecutive transmembrane segments (helical) span residues 23–43 (ILML…AFSP), 87–107 (AATF…LTLI), 132–152 (LLLL…LFVV), 156–176 (IMAI…KGVF), 192–212 (VIVP…FMVS), and 222–242 (ASVV…IYLF).

This sequence belongs to the UPF0259 family.

The protein resides in the cell inner membrane. This chain is UPF0259 membrane protein Spro_2675, found in Serratia proteamaculans (strain 568).